We begin with the raw amino-acid sequence, 286 residues long: 33 kDa chaperonin (286 aa).

2 disulfides stabilise this stretch: Cys225-Cys227 and Cys258-Cys261.

Belongs to the HSP33 family. Post-translationally, under oxidizing conditions two disulfide bonds are formed involving the reactive cysteines. Under reducing conditions zinc is bound to the reactive cysteines and the protein is inactive.

The protein resides in the cytoplasm. Its function is as follows. Redox regulated molecular chaperone. Protects both thermally unfolding and oxidatively damaged proteins from irreversible aggregation. Plays an important role in the bacterial defense system toward oxidative stress. This Shewanella frigidimarina (strain NCIMB 400) protein is 33 kDa chaperonin.